Reading from the N-terminus, the 475-residue chain is Nucleoporin-like protein amo1 (475 aa).

The segment at 1 to 25 (MVVCKYFLQNRCRYGTNCKNQHTVP) adopts a C3H1-type zinc-finger fold. Residues 165–182 (DKSTSNSTVTSNQFNKPT) show a composition bias toward polar residues. Disordered stretches follow at residues 165–208 (DKST…DIFG) and 220–252 (NASP…SSFG). The span at 183–204 (QNSPFNSFSNNNNSFNNNQQAN) shows a compositional bias: low complexity. Residues 220-242 (NASPFSQNTSSNSFTGSNPVQNN) show a composition bias toward polar residues. Low complexity predominate over residues 243–252 (PSSFGSSSFG).

The protein resides in the nucleus. Its function is as follows. Involved in the cell polarity process where it is required for the correct termination of microtubule growth at the cell ends during interphase. This is Nucleoporin-like protein amo1 (amo1) from Schizosaccharomyces pombe (strain 972 / ATCC 24843) (Fission yeast).